Here is a 284-residue protein sequence, read N- to C-terminus: D-tagatose-1,6-bisphosphate aldolase subunit GatY (284 aa).

Catalysis depends on D82, which acts as the Proton donor. 2 residues coordinate Zn(2+): H83 and H180. Residue G181 participates in dihydroxyacetone phosphate binding. H208 contributes to the Zn(2+) binding site. Residues 209–211 and 230–233 contribute to the dihydroxyacetone phosphate site; these read GAS and NVAT.

It belongs to the class II fructose-bisphosphate aldolase family. TagBP aldolase GatY subfamily. Forms a complex with GatZ. It depends on Zn(2+) as a cofactor.

The catalysed reaction is D-tagatofuranose 1,6-bisphosphate = D-glyceraldehyde 3-phosphate + dihydroxyacetone phosphate. Its pathway is carbohydrate metabolism; D-tagatose 6-phosphate degradation; D-glyceraldehyde 3-phosphate and glycerone phosphate from D-tagatose 6-phosphate: step 2/2. Functionally, catalytic subunit of the tagatose-1,6-bisphosphate aldolase GatYZ, which catalyzes the reversible aldol condensation of dihydroxyacetone phosphate (DHAP or glycerone-phosphate) with glyceraldehyde 3-phosphate (G3P) to produce tagatose 1,6-bisphosphate (TBP). Requires GatZ subunit for full activity and stability. Is involved in the catabolism of galactitol. The polypeptide is D-tagatose-1,6-bisphosphate aldolase subunit GatY (Escherichia coli (strain K12 / MC4100 / BW2952)).